The sequence spans 447 residues: Alpha-1,3-mannosyl-glycoprotein 2-beta-N-acetylglucosaminyltransferase (447 aa).

The Cytoplasmic portion of the chain corresponds to 1–6 (MLKKQS). A helical; Signal-anchor for type II membrane protein transmembrane segment spans residues 7–29 (AGLVLWGAILFVAWNALLLLFFW). Over 30 to 447 (TRPVPSRLPS…TWDGYDPSWT (418 aa)) the chain is Lumenal. The cysteines at positions 115 and 145 are disulfide-linked. 4 residues coordinate substrate: Arg117, Asp144, His190, and Asp212. Mn(2+) is bound at residue Asp213. Cysteines 239 and 305 form a disulfide. The Proton acceptor role is filled by Asp291. Position 322 (Ser322) interacts with substrate.

Belongs to the glycosyltransferase 13 family. In terms of assembly, interacts with MGAT4D. Interacts with BRI3. It depends on Mn(2+) as a cofactor.

It localises to the golgi apparatus membrane. The protein resides in the cytoplasm. It is found in the perinuclear region. It catalyses the reaction N(4)-(alpha-D-Man-(1-&gt;3)-[alpha-D-Man-(1-&gt;3)-[alpha-D-Man-(1-&gt;6)]-alpha-D-Man-(1-&gt;6)]-beta-D-Man-(1-&gt;4)-beta-D-GlcNAc-(1-&gt;4)-beta-D-GlcNAc)-L-asparaginyl-[protein] (N-glucan mannose isomer 5A1,2) + UDP-N-acetyl-alpha-D-glucosamine = N(4)-{beta-D-GlcNAc-(1-&gt;2)-alpha-D-Man-(1-&gt;3)-[alpha-D-Man-(1-&gt;3)-[alpha-D-Man-(1-&gt;6)]-alpha-D-Man-(1-&gt;6)]-beta-D-Man-(1-&gt;4)-beta-D-GlcNAc-(1-&gt;4)-beta-D-GlcNAc}-L-asparaginyl-[protein] + UDP + H(+). The protein operates within protein modification; protein glycosylation. Functionally, initiates complex N-linked carbohydrate formation. Essential for the conversion of high-mannose to hybrid and complex N-glycans. This chain is Alpha-1,3-mannosyl-glycoprotein 2-beta-N-acetylglucosaminyltransferase (MGAT1), found in Oryctolagus cuniculus (Rabbit).